The primary structure comprises 653 residues: DNA mismatch repair protein MutL (653 aa).

Positions 368-413 are disordered; it reads EVSQVAEPEGKTDITNKKETETKEKAEKKENKQEEKEEKTSAPEYV. A compositionally biased stretch (basic and acidic residues) spans 375 to 408; that stretch reads PEGKTDITNKKETETKEKAEKKENKQEEKEEKTS.

Belongs to the DNA mismatch repair MutL/HexB family.

This protein is involved in the repair of mismatches in DNA. It is required for dam-dependent methyl-directed DNA mismatch repair. May act as a 'molecular matchmaker', a protein that promotes the formation of a stable complex between two or more DNA-binding proteins in an ATP-dependent manner without itself being part of a final effector complex. The sequence is that of DNA mismatch repair protein MutL from Lactobacillus delbrueckii subsp. bulgaricus (strain ATCC 11842 / DSM 20081 / BCRC 10696 / JCM 1002 / NBRC 13953 / NCIMB 11778 / NCTC 12712 / WDCM 00102 / Lb 14).